Here is a 174-residue protein sequence, read N- to C-terminus: Large ribosomal subunit protein uL15 (174 aa).

Disordered regions lie at residues 1–56 and 150–174; these read MKLH…GQMR and VERR…TPGA. Over residues 21–35 the composition is skewed to gly residues; the sequence is RGIGSGKGKTGGKGM.

It belongs to the universal ribosomal protein uL15 family. Part of the 50S ribosomal subunit.

In terms of biological role, binds to the 23S rRNA. This is Large ribosomal subunit protein uL15 from Roseiflexus castenholzii (strain DSM 13941 / HLO8).